Reading from the N-terminus, the 81-residue chain is Photosystem I iron-sulfur center (81 aa).

2 4Fe-4S ferredoxin-type domains span residues Ser-2–Trp-31 and Ile-39–Tyr-68. [4Fe-4S] cluster-binding residues include Cys-11, Cys-14, Cys-17, Cys-21, Cys-48, Cys-51, Cys-54, and Cys-58.

In terms of assembly, the cyanobacterial PSI reaction center is composed of one copy each of PsaA,B,C,D,E,F,I,J,K,L,M and X, and forms trimeric complexes. It depends on [4Fe-4S] cluster as a cofactor.

The protein localises to the cellular thylakoid membrane. The catalysed reaction is reduced [plastocyanin] + hnu + oxidized [2Fe-2S]-[ferredoxin] = oxidized [plastocyanin] + reduced [2Fe-2S]-[ferredoxin]. Functionally, apoprotein for the two 4Fe-4S centers FA and FB of photosystem I (PSI); essential for photochemical activity. FB is the terminal electron acceptor of PSI, donating electrons to ferredoxin. The C-terminus interacts with PsaA/B/D and helps assemble the protein into the PSI complex. Required for binding of PsaD and PsaE to PSI. PSI is a plastocyanin/cytochrome c6-ferredoxin oxidoreductase, converting photonic excitation into a charge separation, which transfers an electron from the donor P700 chlorophyll pair to the spectroscopically characterized acceptors A0, A1, FX, FA and FB in turn. This chain is Photosystem I iron-sulfur center, found in Synechococcus elongatus (strain ATCC 33912 / PCC 7942 / FACHB-805) (Anacystis nidulans R2).